The sequence spans 759 residues: Secretin XpsD (759 aa).

A signal peptide spans 1–21; the sequence is MSERMTPRLFPVSLLIGLLAG. Cysteine 22 carries N-palmitoyl cysteine lipidation. Cysteine 22 carries S-diacylglycerol cysteine lipidation. The span at 40-51 shows a compositional bias: low complexity; it reads VGAAGATQTTAE. The tract at residues 40-69 is disordered; that stretch reads VGAAGATQTTAEQRADGNASAKPTPVIRRG. The segment at 92–187 is N0; it reads GSATFNFEGE…APSTASPSAA (96 aa). Positions 189 to 253 are N1; the sequence is GFEVRVVPLK…VQIFDVDWLS (65 aa). Residues 254 to 323 are N2; it reads GMSVGVFPIQ…IQQWLDRIDS (70 aa). Residues 326–474 form an N3 region; the sequence is GGVRLFSYEL…SIRDVIEKLD (149 aa). Residues 352 to 434 form a disordered region; it reads GGRGNGGNSG…PPSTNQNGSV (83 aa). Over residues 392–401 the composition is skewed to gly residues; the sequence is ATGGDIGGTS. The span at 425–434 shows a compositional bias: polar residues; sequence PPSTNQNGSV. The secretin stretch occupies residues 479 to 734; it reads QVHIEAQIAE…VLITPSIVRN (256 aa). The interval 736–759 is s domain; sequence QDARDLTDEYGSKFKSMRPMDVHK.

The protein belongs to the bacterial secretin family. GSP D subfamily. In terms of assembly, forms a cylindrical channel with 15 subunits. Binds to XpsN.

It is found in the cell outer membrane. Its function is as follows. Involved in a type II secretion system (T2SS, formerly general secretion pathway, GSP) for the export of proteins. This subunit forms the outer membrane channel. This Xanthomonas campestris pv. campestris (strain ATCC 33913 / DSM 3586 / NCPPB 528 / LMG 568 / P 25) protein is Secretin XpsD (xpsD).